The primary structure comprises 376 residues: tRNA 2-selenouridine synthase (376 aa).

A Rhodanese domain is found at 15–138 (FVAGKPLIDL…MRQYLIGVIE (124 aa)). Catalysis depends on Cys98, which acts as the S-selanylcysteine intermediate.

The protein belongs to the SelU family. As to quaternary structure, monomer.

The enzyme catalyses 5-methylaminomethyl-2-thiouridine(34) in tRNA + selenophosphate + (2E)-geranyl diphosphate + H2O + H(+) = 5-methylaminomethyl-2-selenouridine(34) in tRNA + (2E)-thiogeraniol + phosphate + diphosphate. It carries out the reaction 5-methylaminomethyl-2-thiouridine(34) in tRNA + (2E)-geranyl diphosphate = 5-methylaminomethyl-S-(2E)-geranyl-thiouridine(34) in tRNA + diphosphate. It catalyses the reaction 5-methylaminomethyl-S-(2E)-geranyl-thiouridine(34) in tRNA + selenophosphate + H(+) = 5-methylaminomethyl-2-(Se-phospho)selenouridine(34) in tRNA + (2E)-thiogeraniol. The catalysed reaction is 5-methylaminomethyl-2-(Se-phospho)selenouridine(34) in tRNA + H2O = 5-methylaminomethyl-2-selenouridine(34) in tRNA + phosphate. Involved in the post-transcriptional modification of the uridine at the wobble position (U34) of tRNA(Lys), tRNA(Glu) and tRNA(Gln). Catalyzes the conversion of 2-thiouridine (S2U-RNA) to 2-selenouridine (Se2U-RNA). Acts in a two-step process involving geranylation of 2-thiouridine (S2U) to S-geranyl-2-thiouridine (geS2U) and subsequent selenation of the latter derivative to 2-selenouridine (Se2U) in the tRNA chain. The chain is tRNA 2-selenouridine synthase from Shewanella oneidensis (strain ATCC 700550 / JCM 31522 / CIP 106686 / LMG 19005 / NCIMB 14063 / MR-1).